The primary structure comprises 346 residues: MAEAYKQAGVDIEAGYKAVSLMKQHVQKTMRPEVLSGLGGFGGMFDLSSLGYREPVLISGTDGVGTKLKIAFMMDCHDTIGIDCVAMCVNDIVVQGAEPLFFLDYIACGKAIPEKIAQIVKGIADGCVEAGCALIGGETAEMPGMYDENEYDVAGFAVGIAEKSKLVTGSAIQAGDALIGLASNGIHSNGYSLVRRIVFEQAKLALDRVYEPLSVPLGEELLKPTRIYVKPLLNVMKQFEIKGMAHITGGGFIENIPRMLPKGLGAEIDYGSWPIPPVFDLLQEKGNLLRHDMFSIFNMGIGMVLAVDSEMIHPVIARLEELGEKAYLIGRVKQGEGVSFAGGAMS.

Belongs to the AIR synthase family.

Its subcellular location is the cytoplasm. The catalysed reaction is 2-formamido-N(1)-(5-O-phospho-beta-D-ribosyl)acetamidine + ATP = 5-amino-1-(5-phospho-beta-D-ribosyl)imidazole + ADP + phosphate + H(+). It participates in purine metabolism; IMP biosynthesis via de novo pathway; 5-amino-1-(5-phospho-D-ribosyl)imidazole from N(2)-formyl-N(1)-(5-phospho-D-ribosyl)glycinamide: step 2/2. In Geobacillus sp. (strain WCH70), this protein is Phosphoribosylformylglycinamidine cyclo-ligase.